A 119-amino-acid polypeptide reads, in one-letter code: Basic phospholipase A2 acanthin-1 (119 aa).

Cystine bridges form between C11–C71, C27–C118, C29–C45, C44–C99, C51–C92, C60–C85, and C78–C90. The Ca(2+) site is built by Y28, G30, and G32. The active site involves H48. D49 is a binding site for Ca(2+). Residue D93 is part of the active site.

The cofactor is Ca(2+). Expressed by the venom gland.

The protein localises to the secreted. The enzyme catalyses a 1,2-diacyl-sn-glycero-3-phosphocholine + H2O = a 1-acyl-sn-glycero-3-phosphocholine + a fatty acid + H(+). In terms of biological role, snake venom phospholipase A2 (PLA2) that potently inhibits ADP-(IC(50)=10 nM) and collagen-induced (IC(50)=7 nM) platelet aggregation when tested on human whole blood. PLA2 catalyzes the calcium-dependent hydrolysis of the 2-acyl groups in 3-sn-phosphoglycerides. The sequence is that of Basic phospholipase A2 acanthin-1 from Acanthophis antarcticus (Common death adder).